The sequence spans 453 residues: tRNA modification GTPase MnmE (453 aa).

Residues R22, E79, and K119 each coordinate (6S)-5-formyl-5,6,7,8-tetrahydrofolate. The 162-residue stretch at 215 to 376 (GMKVVIAGRP…LREHLKACMG (162 aa)) folds into the TrmE-type G domain. K(+) is bound at residue N225. Residues 225-230 (NAGKSS), 244-250 (TEIAGTT), 269-272 (DTAG), and 334-337 (NKAD) contribute to the GTP site. Position 229 (S229) interacts with Mg(2+). Residues T244, I246, and T249 each coordinate K(+). A Mg(2+)-binding site is contributed by T250. K453 provides a ligand contact to (6S)-5-formyl-5,6,7,8-tetrahydrofolate.

The protein belongs to the TRAFAC class TrmE-Era-EngA-EngB-Septin-like GTPase superfamily. TrmE GTPase family. As to quaternary structure, homodimer. Heterotetramer of two MnmE and two MnmG subunits. Requires K(+) as cofactor.

The protein localises to the cytoplasm. In terms of biological role, exhibits a very high intrinsic GTPase hydrolysis rate. Involved in the addition of a carboxymethylaminomethyl (cmnm) group at the wobble position (U34) of certain tRNAs, forming tRNA-cmnm(5)s(2)U34. The protein is tRNA modification GTPase MnmE of Aeromonas hydrophila subsp. hydrophila (strain ATCC 7966 / DSM 30187 / BCRC 13018 / CCUG 14551 / JCM 1027 / KCTC 2358 / NCIMB 9240 / NCTC 8049).